We begin with the raw amino-acid sequence, 192 residues long: MTQSSPQNLILVGRVAGAFGVRGELRIATYTEDPLTLTRFKALTRQDGSPALTVQTARVVKDGVVARCAGVDTKEAADALRGLRLYVPRAALPEPDEDEYYLADLIGLPVRHVATDELLGKIKSVQNFGADDLLEIDPALGGQTWYLPFTRAAVPEVKIADGVVLADPPALVGEPEGPESPAEDDDGERHYD.

The PRC barrel domain occupies 97-172 (EDEYYLADLI…VVLADPPALV (76 aa)). Positions 168–192 (PPALVGEPEGPESPAEDDDGERHYD) are disordered.

The protein belongs to the RimM family. As to quaternary structure, binds ribosomal protein uS19.

The protein localises to the cytoplasm. Its function is as follows. An accessory protein needed during the final step in the assembly of 30S ribosomal subunit, possibly for assembly of the head region. Essential for efficient processing of 16S rRNA. May be needed both before and after RbfA during the maturation of 16S rRNA. It has affinity for free ribosomal 30S subunits but not for 70S ribosomes. The chain is Ribosome maturation factor RimM from Caulobacter sp. (strain K31).